A 531-amino-acid chain; its full sequence is Transcription factor LG2 (531 aa).

Disordered regions lie at residues 115–154 and 195–220; these read RHQQ…ASSA and LHGG…KLVD. Over residues 116–154 the composition is skewed to polar residues; the sequence is HQQQLHSGNSQSVGSTGTDSSSAQNTMSQMELVSPASSA. The region spanning 220–264 is the bZIP domain; sequence DAKTERRLAQNREAARKSRLRKKAYVQQLETSRIRLQQVEHELQR. Positions 222 to 242 are basic motif; the sequence is KTERRLAQNREAARKSRLRKK. The Nuclear localization signal motif lies at 224–231; it reads ERRLAQNR. The segment at 248 to 262 is leucine-zipper; the sequence is LETSRIRLQQVEHEL. In terms of domain architecture, DOG1 spans 285–499; sequence AAMFDMEYAR…RALSNLWASR (215 aa).

The protein belongs to the bZIP family. Binds DNA as a dimer. As to expression, expression in meristem/developing ligule regions.

The protein resides in the nucleus. Functionally, required for the formation of the blade-sheath boundary in leaves. Promotes flowering. The protein is Transcription factor LG2 of Zea mays (Maize).